Consider the following 529-residue polypeptide: Methionine--tRNA ligase (529 aa).

A 'HIGH' region motif is present at residues 12–22 (YYVNALPHIGS). Zn(2+) is bound by residues Cys-127, Cys-130, Cys-145, and His-148. A 'KMSKS' region motif is present at residues 301-305 (KMGKS). Lys-304 contributes to the ATP binding site.

Belongs to the class-I aminoacyl-tRNA synthetase family. MetG type 2A subfamily. In terms of assembly, monomer. Zn(2+) serves as cofactor.

It is found in the cytoplasm. The enzyme catalyses tRNA(Met) + L-methionine + ATP = L-methionyl-tRNA(Met) + AMP + diphosphate. In terms of biological role, is required not only for elongation of protein synthesis but also for the initiation of all mRNA translation through initiator tRNA(fMet) aminoacylation. The chain is Methionine--tRNA ligase from Thermosynechococcus vestitus (strain NIES-2133 / IAM M-273 / BP-1).